The chain runs to 963 residues: Importin-13 (963 aa).

HEAT repeat units lie at residues 24 to 54, 56 to 88, 95 to 135, 142 to 179, 194 to 231, 236 to 268, 276 to 325, 330 to 372, 375 to 438, 440 to 476, 487 to 522, 524 to 558, 562 to 600, 603 to 648, 676 to 716, 720 to 754, 761 to 803, 815 to 845, 860 to 893, and 897 to 931; these read ENVEKALHQLYYDPNIENKNLAQKWLMQAQA, PQAWHFSWQLLQPDKVPEIQYFGASALHIKISR, TDQY…LSMM, AVADMVRLFQAEDSPVDSQGRCLALLELLTVLPEEFQT, LAVECGAVFPLLEQLLQQPSSPSCVRQKVLKCFSSWVQ, LQDCEALIQAAFAALQDSELFDSSVEAIVNAIS, VNTL…ALLD, WQSF…DDIL, EAEK…YEML, AELLSNLYDKLGRLLTSSEEPYSWQHTEALLYGFQSI, VVPGLIGLIPRISISNVQLADTVMFTIGALSEWLAD, PVMINSVLPLVLHALGNPELSISSVSTLKKICREC, LPPYAANIVAVSQDVLMKQIHKTSQCMWLMQALGFLLSA, VEEI…SNLF, PVVV…VKTL, FAPMVPQLCEMLGRMYSTIPQASALDLTRQLVHIF, FPPI…ALKR, VKAVFQCAVLALKFPEAPTVKASCGFFTELL, EDGRMLLIAVLEAIGGQASRSLMDCFADILFALN, and FSLLSVWIKEALQAPGFPSARLSPEQKDTFSQQIL. The 67-residue stretch at 45-111 folds into the Importin N-terminal domain; it reads AQKWLMQAQA…KAQLFTQITR (67 aa).

The protein belongs to the importin beta family. In terms of assembly, interacts with UBC9, RAN, RBM8A, eIF-1A and PAX6.

The protein localises to the cytoplasm. Its subcellular location is the nucleus. In terms of biological role, functions in nuclear protein import as nuclear transport receptor. Serves as receptor for nuclear localization signals (NLS) in cargo substrates. Is thought to mediate docking of the importin/substrate complex to the nuclear pore complex (NPC) through binding to nucleoporin and the complex is subsequently translocated through the pore by an energy requiring, Ran-dependent mechanism. At the nucleoplasmic side of the NPC, Ran binds to the importin, the importin/substrate complex dissociates and importin is re-exported from the nucleus to the cytoplasm where GTP hydrolysis releases Ran. The directionality of nuclear import is thought to be conferred by an asymmetric distribution of the GTP- and GDP-bound forms of Ran between the cytoplasm and nucleus. Mediates the nuclear import of UBC9, the RBM8A/MAGOH complex, PAX6 and probably other members of the paired homeobox family. Also mediates nuclear export of eIF-1A, and the cytoplasmic release of eIF-1A is triggered by the loading of import substrates onto IPO13. The chain is Importin-13 (IPO13) from Bos taurus (Bovine).